Reading from the N-terminus, the 1131-residue chain is Replication factor C subunit 1 (1131 aa).

Disordered stretches follow at residues 14–87, 92–111, 120–201, and 225–378; these read KKPV…KSEK, YKPG…ETDE, AASK…NDEA, and ARTL…NYQA. Over residues 38 to 54 the composition is skewed to basic and acidic residues; it reads GVKEAKVNNSGKEDASK. Residue Lys-49 forms a Glycyl lysine isopeptide (Lys-Gly) (interchain with G-Cter in SUMO2) linkage. Residue Tyr-66 is modified to Phosphotyrosine. Residues Ser-68, Ser-70, Ser-72, and Ser-107 each carry the phosphoserine modification. Phosphothreonine is present on Thr-109. Polar residues predominate over residues 127 to 138; sequence NGVSTNSYLGTS. The residue at position 155 (Ser-155) is a Phosphoserine. A phosphothreonine mark is found at Thr-160 and Thr-162. Residues Ser-163, Ser-172, Ser-189, Ser-244, Ser-250, Ser-253, Ser-281, and Ser-309 each carry the phosphoserine modification. A compositionally biased stretch (basic and acidic residues) spans 184–201; that stretch reads KRKESSQNTEDSRLNDEA. Residues 308-319 show a composition bias toward low complexity; sequence SSPKASAKLALM. Basic and acidic residues-rich tracts occupy residues 334-350 and 359-373; these read AARR…EKTT and TKRE…EKKR. Residues 354-528 form an interferon-stimulated-response-element binding region region; the sequence is TKVSPTKRES…KKESESKKCK (175 aa). Ser-365 carries the post-translational modification Phosphoserine. In terms of domain architecture, BRCT spans 399–489; the sequence is GAENCLEGLT…PGKRSKYEMA (91 aa). The segment at 491 to 525 is disordered; sequence EAEMKKEKSKLERTPQKNDQGKRKISPAKKESESK. Ser-535 bears the Phosphoserine mark. 635-642 contacts ATP; the sequence is GPPGVGKT. The tract at residues 1073–1131 is disordered; sequence PALDSEYSEEFQEDDTQSEKEQDAVETDAMIKKKTRSSKPSKSEREKESKKGKGKNWKK. Over residues 1078–1088 the composition is skewed to acidic residues; it reads EYSEEFQEDDT. At Ser-1090 the chain carries Phosphoserine. Residues 1104-1108 carry the Nuclear localization signal motif; that stretch reads KKKTR. Residues 1113–1123 are compositionally biased toward basic and acidic residues; it reads SKSEREKESKK.

Belongs to the activator 1 large subunit family. In terms of assembly, large subunit of the RFC complex, an heteropentameric complex consisting of RFC1 and four small subunits RFC2, RFC3, RFC4 and RFC5; the RFC complex interacts with PCNA and the interaction involves RFC1.

It is found in the nucleus. Functionally, subunit of the replication factor C (RFC) complex which acts during elongation of primed DNA templates by DNA polymerases delta and epsilon, and is necessary for ATP-dependent loading of proliferating cell nuclear antigen (PCNA) onto primed DNA. This subunit binds to the primer-template junction. Binds the PO-B transcription element as well as other GA rich DNA sequences. Can bind single- or double-stranded DNA. This is Replication factor C subunit 1 (Rfc1) from Mus musculus (Mouse).